We begin with the raw amino-acid sequence, 463 residues long: ATP synthase subunit beta 1 (463 aa).

152–159 (GGAGVGKT) is an ATP binding site.

Belongs to the ATPase alpha/beta chains family. As to quaternary structure, F-type ATPases have 2 components, CF(1) - the catalytic core - and CF(0) - the membrane proton channel. CF(1) has five subunits: alpha(3), beta(3), gamma(1), delta(1), epsilon(1). CF(0) has three main subunits: a(1), b(2) and c(9-12). The alpha and beta chains form an alternating ring which encloses part of the gamma chain. CF(1) is attached to CF(0) by a central stalk formed by the gamma and epsilon chains, while a peripheral stalk is formed by the delta and b chains.

The protein resides in the cell inner membrane. It carries out the reaction ATP + H2O + 4 H(+)(in) = ADP + phosphate + 5 H(+)(out). In terms of biological role, produces ATP from ADP in the presence of a proton gradient across the membrane. The catalytic sites are hosted primarily by the beta subunits. This Shewanella frigidimarina (strain NCIMB 400) protein is ATP synthase subunit beta 1.